The chain runs to 229 residues: Heptaprenylglyceryl phosphate synthase (229 aa).

Position 12 (Lys12) interacts with sn-glycerol 1-phosphate. Positions 14 and 40 each coordinate Mg(2+). Residues 159 to 164, Gly189, and 209 to 210 contribute to the sn-glycerol 1-phosphate site; these read YIEYSG and GN.

Belongs to the GGGP/HepGP synthase family. Group I subfamily. In terms of assembly, homodimer. Mg(2+) serves as cofactor.

It catalyses the reaction sn-glycerol 1-phosphate + all-trans-heptaprenyl diphosphate = 3-heptaprenyl-sn-glycero-1-phosphate + diphosphate. Its pathway is membrane lipid metabolism; glycerophospholipid metabolism. Functionally, prenyltransferase that catalyzes in vivo the transfer of the heptaprenyl moiety of heptaprenyl pyrophosphate (HepPP; 35 carbon atoms) to the C3 hydroxyl of sn-glycerol-1-phosphate (G1P), producing heptaprenylglyceryl phosphate (HepGP). This reaction is an ether-bond-formation step in the biosynthesis of archaea-type G1P-based membrane lipids found in Bacillales. This Staphylococcus saprophyticus subsp. saprophyticus (strain ATCC 15305 / DSM 20229 / NCIMB 8711 / NCTC 7292 / S-41) protein is Heptaprenylglyceryl phosphate synthase.